We begin with the raw amino-acid sequence, 226 residues long: DNA mismatch repair protein MutH (226 aa).

Belongs to the MutH family.

It localises to the cytoplasm. Sequence-specific endonuclease that cleaves unmethylated GATC sequences. It is involved in DNA mismatch repair. In Actinobacillus pleuropneumoniae serotype 5b (strain L20), this protein is DNA mismatch repair protein MutH.